Consider the following 691-residue polypeptide: Elongation factor G (691 aa).

The region spanning 6–281 is the tr-type G domain; that stretch reads SRYRNIGIMA…GVVDFLPSPI (276 aa). GTP-binding positions include 15-22, 79-83, and 133-136; these read AHIDAGKT, DTPGH, and NKMD.

It belongs to the TRAFAC class translation factor GTPase superfamily. Classic translation factor GTPase family. EF-G/EF-2 subfamily.

It localises to the cytoplasm. Catalyzes the GTP-dependent ribosomal translocation step during translation elongation. During this step, the ribosome changes from the pre-translocational (PRE) to the post-translocational (POST) state as the newly formed A-site-bound peptidyl-tRNA and P-site-bound deacylated tRNA move to the P and E sites, respectively. Catalyzes the coordinated movement of the two tRNA molecules, the mRNA and conformational changes in the ribosome. This Wolbachia pipientis subsp. Culex pipiens (strain wPip) protein is Elongation factor G.